The chain runs to 424 residues: UDP-N-acetylglucosamine 1-carboxyvinyltransferase (424 aa).

K22–N23 provides a ligand contact to phosphoenolpyruvate. Residue R98 coordinates UDP-N-acetyl-alpha-D-glucosamine. C122 acts as the Proton donor in catalysis. Position 122 is a 2-(S-cysteinyl)pyruvic acid O-phosphothioketal (C122). Residues R127–Q131, D312, and I334 contribute to the UDP-N-acetyl-alpha-D-glucosamine site.

This sequence belongs to the EPSP synthase family. MurA subfamily.

It localises to the cytoplasm. It carries out the reaction phosphoenolpyruvate + UDP-N-acetyl-alpha-D-glucosamine = UDP-N-acetyl-3-O-(1-carboxyvinyl)-alpha-D-glucosamine + phosphate. It functions in the pathway cell wall biogenesis; peptidoglycan biosynthesis. Cell wall formation. Adds enolpyruvyl to UDP-N-acetylglucosamine. The chain is UDP-N-acetylglucosamine 1-carboxyvinyltransferase from Xanthomonas axonopodis pv. citri (strain 306).